Consider the following 181-residue polypeptide: Bradykinin-potentiating and C-type natriuretic peptides (181 aa).

A signal peptide spans M1–G23. Positions K24–S30 are excised as a propeptide. Q31 carries the post-translational modification Pyrrolidone carboxylic acid. A propeptide spanning residues L41 to V43 is cleaved from the precursor. Q44 bears the Pyrrolidone carboxylic acid mark. 2 consecutive propeptides follow at residues T50–D78 and G90–A157. The segment at E74–L153 is disordered. Low complexity predominate over residues S104–S114. Positions A140–A150 are enriched in gly residues. Residues C165 and C181 are joined by a disulfide bond.

The protein in the N-terminal section; belongs to the bradykinin-potentiating peptide family. It in the C-terminal section; belongs to the natriuretic peptide family. As to expression, venom gland.

It localises to the secreted. Functionally, bradykinin-potentiating peptide both inhibits the activity of the angiotensin-converting enzyme (ACE) and enhances the action of bradykinin by inhibiting the peptidases that inactivate it. It acts as an indirect hypotensive agent. Antagonizes the vasodilatory actions of bradykinin at the B2 bradykinin receptor. Has no demonstrable hypotensive activity when injected intravenously in rats. Its function is as follows. has a vasorelaxant activity in rat aortic strips and a diuretic potency in anesthetized rats. May act by activating natriuretic receptors (NPR1 and/or NPR2). In Crotalus durissus collilineatus (Brazilian rattlesnake), this protein is Bradykinin-potentiating and C-type natriuretic peptides.